The chain runs to 148 residues: Cdc42 effector protein 5 (148 aa).

Disordered stretches follow at residues 1-89 (MPVL…DPLL) and 111-148 (RPEAAAAKPDAEPRPGTQPPQARCRPNADLELNDVIGL). One can recognise a CRIB domain in the interval 23–37 (ISAPLGDFRHTLHVG). Arginine 38 bears the Omega-N-methylarginine mark. The segment covering 55–76 (GPPPEPRAPPAGAPRSPPPPAV) has biased composition (pro residues). A compositionally biased stretch (low complexity) spans 77–87 (PQSAAPSPADP).

It belongs to the BORG/CEP family. In terms of assembly, interacts with CDC42, in a GTP-dependent manner, and with SEPT7.

It is found in the endomembrane system. The protein resides in the cytoplasm. It localises to the cytoskeleton. Its function is as follows. Probably involved in the organization of the actin cytoskeleton. May act downstream of CDC42 to induce actin filament assembly leading to cell shape changes. Induces pseudopodia formation in fibroblasts. Inhibits MAPK8 independently of CDC42 binding. Controls septin organization and this effect is negatively regulated by CDC42. This Homo sapiens (Human) protein is Cdc42 effector protein 5 (CDC42EP5).